The chain runs to 245 residues: Ureidoacrylate amidohydrolase RutB (245 aa).

Asp41 (proton acceptor) is an active-site residue. Lys150 is a catalytic residue. The active-site Nucleophile is Cys183.

The protein belongs to the isochorismatase family. RutB subfamily.

It carries out the reaction (Z)-3-ureidoacrylate + H2O + H(+) = (Z)-3-aminoacrylate + NH4(+) + CO2. The enzyme catalyses (Z)-3-ureidoacrylate + H2O = (Z)-3-aminoacrylate + carbamate + H(+). It catalyses the reaction (Z)-2-methylureidoacrylate + H2O + H(+) = (Z)-2-methylaminoacrylate + NH4(+) + CO2. Hydrolyzes ureidoacrylate to form aminoacrylate and carbamate. The carbamate hydrolyzes spontaneously, thereby releasing one of the nitrogen atoms of the pyrimidine ring as ammonia and one of its carbon atoms as CO2. This chain is Ureidoacrylate amidohydrolase RutB, found in Pseudomonas savastanoi pv. phaseolicola (strain 1448A / Race 6) (Pseudomonas syringae pv. phaseolicola (strain 1448A / Race 6)).